A 173-amino-acid polypeptide reads, in one-letter code: NADH-ubiquinone oxidoreductase chain 6 (173 aa).

Helical transmembrane passes span 1–21, 27–47, 48–68, 87–107, and 139–159; these read MTYF…AVAS, YGVV…LSLG, VSFV…VVFV, VVGY…VGGF, and CGVG…FVVL.

It belongs to the complex I subunit 6 family.

The protein localises to the mitochondrion membrane. The catalysed reaction is a ubiquinone + NADH + 5 H(+)(in) = a ubiquinol + NAD(+) + 4 H(+)(out). Functionally, core subunit of the mitochondrial membrane respiratory chain NADH dehydrogenase (Complex I) that is believed to belong to the minimal assembly required for catalysis. Complex I functions in the transfer of electrons from NADH to the respiratory chain. The immediate electron acceptor for the enzyme is believed to be ubiquinone. This chain is NADH-ubiquinone oxidoreductase chain 6 (MT-ND6), found in Ptychoramphus aleuticus (Cassin's auklet).